The sequence spans 98 residues: Acylphosphatase (98 aa).

The region spanning 12 to 98 (RLSAWVHGHV…DATMTGFSER (87 aa)) is the Acylphosphatase-like domain. Catalysis depends on residues Arg-27 and Asn-45.

The protein belongs to the acylphosphatase family.

The catalysed reaction is an acyl phosphate + H2O = a carboxylate + phosphate + H(+). The chain is Acylphosphatase (acyP) from Mycolicibacterium smegmatis (strain ATCC 700084 / mc(2)155) (Mycobacterium smegmatis).